The chain runs to 450 residues: Protein tweety homolog 1 (450 aa).

Topologically, residues 1-43 (MGAPPGYRPSAWVHLLHQLPRADFQLRPVPSGFAPRDQEYQQA) are extracellular. A helical membrane pass occupies residues 44-64 (LLLVAALAGLGLGLSLIFIAV). Residues 65-88 (YLIRFCCCRPPEPPGAKSPPPGGG) lie on the Cytoplasmic side of the membrane. Residues 89 to 109 (CVTWSCIAALLVGCAGIGIGF) form a helical membrane-spanning segment. Residues 110-214 (YGNSETSDGV…DVTFVEEYRW (105 aa)) lie on the Extracellular side of the membrane. N-linked (GlcNAc...) asparagine glycosylation occurs at Asn130. The helical transmembrane segment at 215–235 (LAYVLLLLLVLLVCLFTLLGL) threads the bilayer. Over 236–240 (AKQSK) the chain is Cytoplasmic. A helical membrane pass occupies residues 241 to 261 (WLVVVMTAMSLLVLVLSWGSM). Over 262-390 (GLEAATAVGL…LRGLCEDALE (129 aa)) the chain is Extracellular. 2 disulfide bridges follow: Cys275–Cys385 and Cys303–Cys370. 2 N-linked (GlcNAc...) asparagine glycosylation sites follow: Asn284 and Asn355. Residues 391–411 (GLLFLMLFSLLSAGALATTLC) traverse the membrane as a helical segment. The Cytoplasmic portion of the chain corresponds to 412–450 (SLPRAWALFPPSDDYDDTDDDDPFNPQESKRFVQWQSSI). Residues 428–450 (DTDDDDPFNPQESKRFVQWQSSI) are disordered. A Phosphoserine modification is found at Ser440.

It belongs to the tweety family. In terms of assembly, homotetramer; disulfide-linked. Homodimer. Post-translationally, N-glycosylated. Contains high-mannose, hybrid and complex oligosaccharides.

Its subcellular location is the cell membrane. The enzyme catalyses chloride(in) = chloride(out). It catalyses the reaction L-glutamate(out) = L-glutamate(in). Calcium-independent, swelling-dependent volume-regulated anion channel (VRAC-swell) which plays a pivotal role in the process of regulatory volume decrease (RVD) in the brain through the efflux of anions like chloride and organic osmolytes like glutamate. The sequence is that of Protein tweety homolog 1 (Ttyh1) from Rattus norvegicus (Rat).